The primary structure comprises 507 residues: Putative thymidine phosphorylase (507 aa).

It belongs to the thymidine/pyrimidine-nucleoside phosphorylase family. Type 2 subfamily.

The enzyme catalyses thymidine + phosphate = 2-deoxy-alpha-D-ribose 1-phosphate + thymine. The protein is Putative thymidine phosphorylase of Ralstonia nicotianae (strain ATCC BAA-1114 / GMI1000) (Ralstonia solanacearum).